The primary structure comprises 898 residues: Endoplasmic reticulum metallopeptidase 1 (898 aa).

Residue methionine 1 is modified to N-acetylmethionine. The interval 1–59 (MEWSSESAAVRRHRGTAERREGQAAASHPQREASAQEDARGGGRMRGRTESGGESRGAK) is disordered. The Cytoplasmic segment spans residues 1–66 (MEWSSESAAV…GAKTALSEAR (66 aa)). Positions 37-57 (EDARGGGRMRGRTESGGESRG) are enriched in basic and acidic residues. The chain crosses the membrane as a helical span at residues 67 to 87 (TALALALYLLALRALVQLSLQ). Residues 88–393 (RLVLSRTSGL…SSSEYRHGSM (306 aa)) are Lumenal-facing. Asparagine 176 is a glycosylation site (N-linked (GlcNAc...) asparagine). The cysteines at positions 198 and 216 are disulfide-linked. Zn(2+) contacts are provided by histidine 199 and aspartate 211. The active-site Proton acceptor is glutamate 245. Residues glutamate 246, glutamate 272, and histidine 348 each coordinate Zn(2+). Residues 394–414 (VFFDVLGLLVIAYPSRVGSII) traverse the membrane as a helical segment. Topologically, residues 415–451 (NYMVVMAVVLYLGRKLLRPNHSNSNYVRDFLCGLGIT) are cytoplasmic. The helical transmembrane segment at 452 to 472 (FISWFTSLVTVLIIAVFVSLI) threads the bilayer. Residues 473 to 480 (GQSLSWYN) are Lumenal-facing. The chain crosses the membrane as a helical span at residues 481–501 (YFYIAVCLYGTATVAKIILIH). The Cytoplasmic portion of the chain corresponds to 502 to 515 (TLAKRFYYVNASDL). The helical transmembrane segment at 516–538 (YLGELFFDTSLFVHCGFLVALTA) threads the bilayer. The Lumenal segment spans residues 539–542 (QGFC). A helical transmembrane segment spans residues 543 to 562 (SAFMSAVWVAFPLLTKLCVY). Topologically, residues 563–573 (KDFKKHGAKGR) are cytoplasmic. A helical membrane pass occupies residues 574-594 (FIALYLLGMFIPYLYGLYLIW). At 595–615 (AVFEMFTPILGRSGSEIPPDV) the chain is on the lumenal side. A helical membrane pass occupies residues 616 to 636 (VLASILAVCVMILSSYFITFI). Residues 637–645 (YLVNSTKKT) lie on the Cytoplasmic side of the membrane. A helical membrane pass occupies residues 646 to 666 (ILTLILVCAVTFLLVCSGAFF). Topologically, residues 667–898 (PYSSNPDSPK…WVSTYSLFVF (232 aa)) are lumenal. N-linked (GlcNAc...) asparagine glycosylation is present at asparagine 724.

The protein belongs to the peptidase M28 family. Zn(2+) serves as cofactor. In terms of tissue distribution, widely expressed, with highest levels in ovary, kidney, hypothalamus and hippocampus. Within the ovarian follicle, expressed in granulosa cells, but not in oocytes. Present in both preantral and antral follicles, but not in atretic antral follicle.

It localises to the endoplasmic reticulum membrane. Its function is as follows. Within the ovary, required for the organization of somatic cells and oocytes into discrete follicular structures. This Rattus norvegicus (Rat) protein is Endoplasmic reticulum metallopeptidase 1.